The sequence spans 501 residues: ATP synthase subunit alpha (501 aa).

Position 169-176 (169-176 (GDRQTGKT)) interacts with ATP.

Belongs to the ATPase alpha/beta chains family. In terms of assembly, F-type ATPases have 2 components, CF(1) - the catalytic core - and CF(0) - the membrane proton channel. CF(1) has five subunits: alpha(3), beta(3), gamma(1), delta(1), epsilon(1). CF(0) has three main subunits: a(1), b(2) and c(9-12). The alpha and beta chains form an alternating ring which encloses part of the gamma chain. CF(1) is attached to CF(0) by a central stalk formed by the gamma and epsilon chains, while a peripheral stalk is formed by the delta and b chains.

It is found in the cell membrane. It carries out the reaction ATP + H2O + 4 H(+)(in) = ADP + phosphate + 5 H(+)(out). Functionally, produces ATP from ADP in the presence of a proton gradient across the membrane. The alpha chain is a regulatory subunit. The polypeptide is ATP synthase subunit alpha (Streptococcus equi subsp. zooepidemicus (strain H70)).